The following is a 1295-amino-acid chain: Phosphoribosylformylglycinamidine synthase (1295 aa).

The tract at residues 305 to 327 (WPGAATGSGGEIRDEGATGRGAK) is disordered. ATP-binding positions include 307 to 318 (GAATGSGGEIRD), 386 to 388 (TGY), and Ala678. Residues Asp679, Glu718, Asn722, and Asp884 each coordinate Mg(2+). Ser886 contributes to the ATP binding site. Positions 1042 to 1295 (VAVLREQGVN…IFRNARKQLG (254 aa)) constitute a Glutamine amidotransferase type-1 domain. The active-site Nucleophile is Cys1135. Catalysis depends on residues His1260 and Glu1262.

In the N-terminal section; belongs to the FGAMS family. Monomer.

Its subcellular location is the cytoplasm. The catalysed reaction is N(2)-formyl-N(1)-(5-phospho-beta-D-ribosyl)glycinamide + L-glutamine + ATP + H2O = 2-formamido-N(1)-(5-O-phospho-beta-D-ribosyl)acetamidine + L-glutamate + ADP + phosphate + H(+). It participates in purine metabolism; IMP biosynthesis via de novo pathway; 5-amino-1-(5-phospho-D-ribosyl)imidazole from N(2)-formyl-N(1)-(5-phospho-D-ribosyl)glycinamide: step 1/2. Phosphoribosylformylglycinamidine synthase involved in the purines biosynthetic pathway. Catalyzes the ATP-dependent conversion of formylglycinamide ribonucleotide (FGAR) and glutamine to yield formylglycinamidine ribonucleotide (FGAM) and glutamate. This Salmonella typhimurium (strain LT2 / SGSC1412 / ATCC 700720) protein is Phosphoribosylformylglycinamidine synthase.